Consider the following 278-residue polypeptide: Transmembrane protein 45B (278 aa).

Transmembrane regions (helical) follow at residues 7–27 (HALPGSFFLIFGLWWSVKYPL), 49–69 (IIEGAVKALFAVIGILAEQFV), 95–115 (YLFFGVSGIIDMLTYLYFNIV), 117–137 (LGLDRVVLAMAVFVEGFLFYF), 149–169 (IHSLLLFSLFGATISICLEVI), 183–203 (LLILQGTWFWQIGFVLFPPFG), and 215–235 (VMFITMCFCWHYLVALCITAI). 2 positions are modified to phosphoserine: serine 273 and serine 275.

This sequence belongs to the TMEM45 family.

Its subcellular location is the endosome membrane. The protein resides in the lysosome membrane. It localises to the golgi apparatus. It is found in the trans-Golgi network membrane. Functionally, plays a role in innate immunity. This is Transmembrane protein 45B (Tmem45b) from Rattus norvegicus (Rat).